We begin with the raw amino-acid sequence, 417 residues long: Dihydrolipoyllysine-residue succinyltransferase component of 2-oxoglutarate dehydrogenase complex (417 aa).

The 76-residue stretch at 1–76 folds into the Lipoyl-binding domain; the sequence is MAEIKVPELA…QVGEIIGTIS (76 aa). K42 bears the N6-lipoyllysine mark. Residues 75-191 are disordered; it reads ISEGAGESSA…SFDKPVEVQK (117 aa). Composition is skewed to basic and acidic residues over residues 89–103 and 152–163; these read EKTE…EKQA and RKQDVEAYEKPA. Residues 123-160 form the Peripheral subunit-binding (PSBD) domain; sequence IASPSARKLAREKGIDLSQVPTGDPLGRVRKQDVEAYE. Over residues 164–182 the composition is skewed to low complexity; that stretch reads SKPAPQQKQQPQAQKAQQS. Active-site residues include H388 and D392.

It belongs to the 2-oxoacid dehydrogenase family. In terms of assembly, forms a 24-polypeptide structural core with octahedral symmetry. Part of the 2-oxoglutarate dehydrogenase (OGDH) complex composed of E1 (2-oxoglutarate dehydrogenase), E2 (dihydrolipoamide succinyltransferase) and E3 (dihydrolipoamide dehydrogenase); the complex contains multiple copies of the three enzymatic components (E1, E2 and E3). The cofactor is (R)-lipoate.

The catalysed reaction is N(6)-[(R)-dihydrolipoyl]-L-lysyl-[protein] + succinyl-CoA = N(6)-[(R)-S(8)-succinyldihydrolipoyl]-L-lysyl-[protein] + CoA. It participates in amino-acid degradation; L-lysine degradation via saccharopine pathway; glutaryl-CoA from L-lysine: step 6/6. Its function is as follows. E2 component of the 2-oxoglutarate dehydrogenase (OGDH) complex which catalyzes the second step in the conversion of 2-oxoglutarate to succinyl-CoA and CO(2). This Bacillus subtilis (strain 168) protein is Dihydrolipoyllysine-residue succinyltransferase component of 2-oxoglutarate dehydrogenase complex (odhB).